Here is a 182-residue protein sequence, read N- to C-terminus: Ribulose bisphosphate carboxylase small subunit, chloroplastic 6 (182 aa).

The N-terminal 41 residues, 1–41 (MAATMMSKTIISSKQCSKPIAPPKVSINKGFVNTSAAIKNR), are a transit peptide targeting the chloroplast.

It belongs to the RuBisCO small chain family. As to quaternary structure, heterohexadecamer of 8 large and 8 small subunits.

The protein resides in the plastid. It localises to the chloroplast. Functionally, ruBisCO catalyzes two reactions: the carboxylation of D-ribulose 1,5-bisphosphate, the primary event in carbon dioxide fixation, as well as the oxidative fragmentation of the pentose substrate. Both reactions occur simultaneously and in competition at the same active site. Although the small subunit is not catalytic it is essential for maximal activity. The sequence is that of Ribulose bisphosphate carboxylase small subunit, chloroplastic 6 from Acetabularia peniculus (Green alga).